A 391-amino-acid polypeptide reads, in one-letter code: Casein kinase II subunit alpha (391 aa).

The tract at residues 36-41 (QDDYQL) is interaction with beta subunit. A Protein kinase domain is found at 39–324 (YQLVRKLGRG…AREAMEHPYF (286 aa)). Residues 45–53 (LGRGKYSEV) and lysine 68 each bind ATP. Aspartate 156 (proton acceptor) is an active-site residue. 2 positions are modified to phosphothreonine; by CDK1: threonine 344 and threonine 360. A phosphoserine; by CDK1 mark is found at serine 362 and serine 370.

It belongs to the protein kinase superfamily. Ser/Thr protein kinase family. CK2 subfamily. In terms of assembly, heterotetramer composed of two catalytic subunits (alpha chain and/or alpha' chain) and two regulatory subunits (beta chains). The tetramer can exist as a combination of 2 alpha/2 beta, 2 alpha'/2 beta or 1 alpha/1 alpha'/2 beta subunits. Also part of a CK2-SPT16-SSRP1 complex composed of SSRP1, SUPT16H, CSNK2A1, CSNK2A2 and CSNK2B, which forms following UV irradiation. Interacts with RNPS1. Interacts with SNAI1. Interacts with PML. Interacts with CCAR2. Interacts with HIRIP3. Post-translationally, phosphorylated at Thr-344, Thr-360, Ser-362 and Ser-370 by CDK1 in prophase and metaphase and dephosphorylated during anaphase. Phosphorylation does not directly affect casein kinase 2 activity, but may contribute to its regulation by forming binding sites for interacting proteins and/or targeting it to different compartments.

The protein localises to the nucleus. It carries out the reaction L-seryl-[protein] + ATP = O-phospho-L-seryl-[protein] + ADP + H(+). It catalyses the reaction L-threonyl-[protein] + ATP = O-phospho-L-threonyl-[protein] + ADP + H(+). Constitutively active protein kinase whose activity is not directly affected by phosphorylation. Seems to be regulated by level of expression and localization. Functionally, catalytic subunit of a constitutively active serine/threonine-protein kinase complex that phosphorylates a large number of substrates containing acidic residues C-terminal to the phosphorylated serine or threonine. Regulates numerous cellular processes, such as cell cycle progression, apoptosis and transcription, as well as viral infection. May act as a regulatory node which integrates and coordinates numerous signals leading to an appropriate cellular response. During mitosis, functions as a component of the p53/TP53-dependent spindle assembly checkpoint (SAC) that maintains cyclin-B-CDK1 activity and G2 arrest in response to spindle damage. Also required for p53/TP53-mediated apoptosis, phosphorylating 'Ser-392' of p53/TP53 following UV irradiation. Phosphorylates a number of DNA repair proteins in response to DNA damage, such as MDC1, MRE11, RAD9A, RAD51 and HTATSF1, promoting their recruitment to DNA damage sites. Can also negatively regulate apoptosis. Phosphorylates the caspases CASP9 and CASP2 and the apoptotic regulator NOL3. Phosphorylation protects CASP9 from cleavage and activation by CASP8, and inhibits the dimerization of CASP2 and activation of CASP8. Phosphorylates YY1, protecting YY1 from cleavage by CASP7 during apoptosis. Regulates transcription by direct phosphorylation of RNA polymerases I, II, III and IV. Also phosphorylates and regulates numerous transcription factors including NF-kappa-B, STAT1, CREB1, IRF1, IRF2, ATF1, ATF4, SRF, MAX, JUN, FOS, MYC and MYB. Phosphorylates Hsp90 and its co-chaperones FKBP4 and CDC37, which is essential for chaperone function. Mediates sequential phosphorylation of FNIP1, promoting its gradual interaction with Hsp90, leading to activate both kinase and non-kinase client proteins of Hsp90. Regulates Wnt signaling by phosphorylating CTNNB1 and the transcription factor LEF1. Acts as an ectokinase that phosphorylates several extracellular proteins. Phosphorylates PML at 'Ser-565' and primes it for ubiquitin-mediated degradation. Plays an important role in the circadian clock function by phosphorylating BMAL1 at 'Ser-90' which is pivotal for its interaction with CLOCK and which controls CLOCK nuclear entry. Phosphorylates FMR1, promoting FMR1-dependent formation of a membraneless compartment. May phosphorylate histone H2A on 'Ser-1'. The sequence is that of Casein kinase II subunit alpha (CSNK2A1) from Oryctolagus cuniculus (Rabbit).